The chain runs to 335 residues: MAARWRFWCVSVTMVVALLIVCDVPSASAQRKKEMVLSEKVSQLMEWTNKRPVIRMNGDKFRRLVKAPPRNYSVIVMFTALQLHRQCVVCKQADEEFQILANSWRYSSAFTNRIFFAMVDFDEGSDVFQMLNMNSAPTFINFPAKGKPKRGDTYELQVRGFSAEQIARWIADRTDVNIRVIRPPNYAGPLMLGLLLAVIGGLVYLRRSNMEFLFNKTGWAFAALCFVLAMTSGQMWNHIRGPPYAHKNPHTGHVNYIHGSSQAQFVAETHIVLLFNGGVTLGMVLLCEAATSDMDIGKRKIMCVAGIGLVVLFFSWMLSIFRSKYHGYPYSFLMS.

Residues 1–29 (MAARWRFWCVSVTMVVALLIVCDVPSASA) form the signal peptide. At 30-184 (QRKKEMVLSE…DVNIRVIRPP (155 aa)) the chain is on the extracellular side. Residues 47 to 175 (WTNKRPVIRM…IARWIADRTD (129 aa)) enclose the Thioredoxin domain. The N-linked (GlcNAc...) asparagine glycan is linked to asparagine 71. The cysteines at positions 87 and 90 are disulfide-linked. Residues 185 to 205 (NYAGPLMLGLLLAVIGGLVYL) traverse the membrane as a helical segment. Over 206-209 (RRSN) the chain is Cytoplasmic. A helical transmembrane segment spans residues 210–230 (MEFLFNKTGWAFAALCFVLAM). Residues 231 to 270 (TSGQMWNHIRGPPYAHKNPHTGHVNYIHGSSQAQFVAETH) are Extracellular-facing. A helical transmembrane segment spans residues 271–291 (IVLLFNGGVTLGMVLLCEAAT). Topologically, residues 292 to 300 (SDMDIGKRK) are cytoplasmic. A helical membrane pass occupies residues 301 to 321 (IMCVAGIGLVVLFFSWMLSIF). Residues 322-335 (RSKYHGYPYSFLMS) lie on the Extracellular side of the membrane.

Belongs to the OST3/OST6 family. In terms of assembly, accessory component of the STT3B-containing form of the oligosaccharyltransferase (OST) complex. OST exists in two different complex forms which contain common core subunits RPN1, RPN2, OST48, OST4, DAD1 and TMEM258, either STT3A or STT3B as catalytic subunits, and form-specific accessory subunits. OST can form stable complexes with the Sec61 complex or with both the Sec61 and TRAP complexes. The association of TUSC3 or MAGT1 with the STT3B-containing complex seems to be mutually exclusvice. Ubiquitous. Expressed at very low levels in brain, lung and kidney.

It localises to the cell membrane. The protein localises to the endoplasmic reticulum. It is found in the endoplasmic reticulum membrane. It participates in protein modification; protein glycosylation. Functionally, accessory component of the STT3B-containing form of the N-oligosaccharyl transferase (OST) complex which catalyzes the transfer of a high mannose oligosaccharide from a lipid-linked oligosaccharide donor to an asparagine residue within an Asn-X-Ser/Thr consensus motif in nascent polypeptide chains. Involved in N-glycosylation of STT3B-dependent substrates. Specifically required for the glycosylation of a subset of acceptor sites that are near cysteine residues; in this function seems to act redundantly with TUSC3. In its oxidized form proposed to form transient mixed disulfides with a glycoprotein substrate to facilitate access of STT3B to the unmodified acceptor site. Also has oxidoreductase-independent functions in the STT3B-containing OST complex possibly involving substrate recognition. Could indirectly play a role in Mg(2+) transport in epithelial cells. This chain is Dolichyl-diphosphooligosaccharide--protein glycosyltransferase subunit MAGT1, found in Homo sapiens (Human).